A 275-amino-acid chain; its full sequence is Large ribosomal subunit protein uL2 (275 aa).

The disordered stretch occupies residues 236–263 (EGRGKGQHPVTPWGMPTKGYKTRRGRRA).

Belongs to the universal ribosomal protein uL2 family. As to quaternary structure, part of the 50S ribosomal subunit. Forms a bridge to the 30S subunit in the 70S ribosome.

One of the primary rRNA binding proteins. Required for association of the 30S and 50S subunits to form the 70S ribosome, for tRNA binding and peptide bond formation. It has been suggested to have peptidyltransferase activity; this is somewhat controversial. Makes several contacts with the 16S rRNA in the 70S ribosome. The chain is Large ribosomal subunit protein uL2 from Pseudothermotoga lettingae (strain ATCC BAA-301 / DSM 14385 / NBRC 107922 / TMO) (Thermotoga lettingae).